The sequence spans 250 residues: Ubiquinone/menaquinone biosynthesis C-methyltransferase UbiE (250 aa).

Residues threonine 73, aspartate 94, asparagine 122 to alanine 123, and serine 139 contribute to the S-adenosyl-L-methionine site.

The protein belongs to the class I-like SAM-binding methyltransferase superfamily. MenG/UbiE family.

It catalyses the reaction a 2-demethylmenaquinol + S-adenosyl-L-methionine = a menaquinol + S-adenosyl-L-homocysteine + H(+). It carries out the reaction a 2-methoxy-6-(all-trans-polyprenyl)benzene-1,4-diol + S-adenosyl-L-methionine = a 5-methoxy-2-methyl-3-(all-trans-polyprenyl)benzene-1,4-diol + S-adenosyl-L-homocysteine + H(+). The protein operates within quinol/quinone metabolism; menaquinone biosynthesis; menaquinol from 1,4-dihydroxy-2-naphthoate: step 2/2. It functions in the pathway cofactor biosynthesis; ubiquinone biosynthesis. Functionally, methyltransferase required for the conversion of demethylmenaquinol (DMKH2) to menaquinol (MKH2) and the conversion of 2-polyprenyl-6-methoxy-1,4-benzoquinol (DDMQH2) to 2-polyprenyl-3-methyl-6-methoxy-1,4-benzoquinol (DMQH2). The sequence is that of Ubiquinone/menaquinone biosynthesis C-methyltransferase UbiE from Francisella tularensis subsp. tularensis (strain WY96-3418).